The chain runs to 155 residues: 2-C-methyl-D-erythritol 2,4-cyclodiphosphate synthase (155 aa).

Residues Asp8 and His10 each coordinate a divalent metal cation. Residues 8–10 (DVH) and 34–35 (HS) contribute to the 4-CDP-2-C-methyl-D-erythritol 2-phosphate site. His42 lines the a divalent metal cation pocket. Residues 56-58 (DIG), 61-65 (FPDSD), 100-106 (AQKPKML), 132-135 (TTEE), Phe139, and Lys142 contribute to the 4-CDP-2-C-methyl-D-erythritol 2-phosphate site.

The protein belongs to the IspF family. In terms of assembly, homotrimer. Requires a divalent metal cation as cofactor.

The enzyme catalyses 4-CDP-2-C-methyl-D-erythritol 2-phosphate = 2-C-methyl-D-erythritol 2,4-cyclic diphosphate + CMP. The protein operates within isoprenoid biosynthesis; isopentenyl diphosphate biosynthesis via DXP pathway; isopentenyl diphosphate from 1-deoxy-D-xylulose 5-phosphate: step 4/6. In terms of biological role, involved in the biosynthesis of isopentenyl diphosphate (IPP) and dimethylallyl diphosphate (DMAPP), two major building blocks of isoprenoid compounds. Catalyzes the conversion of 4-diphosphocytidyl-2-C-methyl-D-erythritol 2-phosphate (CDP-ME2P) to 2-C-methyl-D-erythritol 2,4-cyclodiphosphate (ME-CPP) with a corresponding release of cytidine 5-monophosphate (CMP). This is 2-C-methyl-D-erythritol 2,4-cyclodiphosphate synthase from Clostridium botulinum (strain Okra / Type B1).